A 117-amino-acid chain; its full sequence is Large ribosomal subunit protein bL19 (117 aa).

This sequence belongs to the bacterial ribosomal protein bL19 family.

Functionally, this protein is located at the 30S-50S ribosomal subunit interface and may play a role in the structure and function of the aminoacyl-tRNA binding site. The chain is Large ribosomal subunit protein bL19 from Vibrio campbellii (strain ATCC BAA-1116).